Reading from the N-terminus, the 82-residue chain is Metallothionein-like protein 2A (82 aa).

This sequence belongs to the metallothionein superfamily. Type 15 family. In terms of tissue distribution, expressed in stems, leaves, rachis, inflorescences and seeds.

Its function is as follows. Metallothioneins have a high content of cysteine residues that bind various heavy metals. The sequence is that of Metallothionein-like protein 2A (MT2A) from Oryza sativa subsp. japonica (Rice).